A 340-amino-acid polypeptide reads, in one-letter code: MNTMIKAGIIGASGYTGGELLRLLVSHPDVSLELATSRSLAGKPVASTHRHLEGFLDLKYENPGLEEIRERCDLVFLAVPHGTGMNYVPELLDGSTKVIDLSADYRLDIPVFEKIYGIKHSDPRNAVYGLVELHPEAAREYFVANPGCFPTGAILSAAPLAAAGLIDIAVFDSKTGISGAGISPTETSHYPNLAENIVPYKLTAHRHRAEIVQELTRLDGNLRNISFTPHVIPTIRGISTTAHLFTKEPLSTEDVRGIYEEFYRDKPFVRLPGGVPSLTAVRGSNFCDIGFEADKENNRVVVLSAIDNLVKGASGQAIQNMNLMFGLVETRGLWTPATAP.

Residue Cys148 is part of the active site.

Belongs to the NAGSA dehydrogenase family. Type 1 subfamily.

It localises to the cytoplasm. It carries out the reaction N-acetyl-L-glutamate 5-semialdehyde + phosphate + NADP(+) = N-acetyl-L-glutamyl 5-phosphate + NADPH + H(+). It functions in the pathway amino-acid biosynthesis; L-arginine biosynthesis; N(2)-acetyl-L-ornithine from L-glutamate: step 3/4. In terms of biological role, catalyzes the NADPH-dependent reduction of N-acetyl-5-glutamyl phosphate to yield N-acetyl-L-glutamate 5-semialdehyde. This chain is N-acetyl-gamma-glutamyl-phosphate reductase, found in Methanosarcina mazei (strain ATCC BAA-159 / DSM 3647 / Goe1 / Go1 / JCM 11833 / OCM 88) (Methanosarcina frisia).